The primary structure comprises 420 residues: Glucose-1-phosphate adenylyltransferase (420 aa).

Alpha-D-glucose 1-phosphate is bound by residues tyrosine 107, glycine 173, 188-189, and serine 206; that span reads EK.

It belongs to the bacterial/plant glucose-1-phosphate adenylyltransferase family. Homotetramer.

The enzyme catalyses alpha-D-glucose 1-phosphate + ATP + H(+) = ADP-alpha-D-glucose + diphosphate. Its pathway is glycan biosynthesis; glycogen biosynthesis. Functionally, involved in the biosynthesis of ADP-glucose, a building block required for the elongation reactions to produce glycogen. Catalyzes the reaction between ATP and alpha-D-glucose 1-phosphate (G1P) to produce pyrophosphate and ADP-Glc. The chain is Glucose-1-phosphate adenylyltransferase from Shewanella oneidensis (strain ATCC 700550 / JCM 31522 / CIP 106686 / LMG 19005 / NCIMB 14063 / MR-1).